A 611-amino-acid polypeptide reads, in one-letter code: Leucine aminopeptidase 2 (611 aa).

Residues 135-137 and 265-270 each bind a peptide; these read QCQ and PYGGME. Residue His294 participates in Zn(2+) binding. Glu295 acts as the Proton acceptor in catalysis. The Zn(2+) site is built by His298 and Glu317. Tyr383 serves as the catalytic Proton donor.

Belongs to the peptidase M1 family. Requires Zn(2+) as cofactor.

The protein resides in the cytoplasm. The protein localises to the nucleus. The enzyme catalyses an epoxide + H2O = an ethanediol. Its function is as follows. Aminopeptidase that preferentially cleaves di- and tripeptides. Also has low epoxide hydrolase activity (in vitro). Can hydrolyze the epoxide leukotriene LTA(4) but it forms preferentially 5,6-dihydroxy-7,9,11,14-eicosatetraenoic acid rather than the cytokine leukotriene B(4) as the product compared to the homologous mammalian enzyme (in vitro). The protein is Leucine aminopeptidase 2 of Chaetomium globosum (strain ATCC 6205 / CBS 148.51 / DSM 1962 / NBRC 6347 / NRRL 1970) (Soil fungus).